A 144-amino-acid chain; its full sequence is Superoxide dismutase [Mn], mitochondrial (144 aa).

Residues His10, His58, and Asp143 each contribute to the Mn(2+) site.

The protein belongs to the iron/manganese superoxide dismutase family. As to quaternary structure, homotetramer. Mn(2+) serves as cofactor.

Its subcellular location is the mitochondrion matrix. It catalyses the reaction 2 superoxide + 2 H(+) = H2O2 + O2. Its function is as follows. Destroys superoxide anion radicals which are normally produced within the cells and which are toxic to biological systems. This is Superoxide dismutase [Mn], mitochondrial from Palinurus vulgaris (European spiny lobster).